The primary structure comprises 522 residues: Glucans biosynthesis protein G (522 aa).

A signal peptide spans 1 to 33; the sequence is MPNNKFFVKSSKASLRWLGATVLLTLYALPSWA.

Belongs to the OpgD/OpgG family.

It localises to the periplasm. It functions in the pathway glycan metabolism; osmoregulated periplasmic glucan (OPG) biosynthesis. Its function is as follows. Involved in the biosynthesis of osmoregulated periplasmic glucans (OPGs). This is Glucans biosynthesis protein G from Sodalis glossinidius (strain morsitans).